Reading from the N-terminus, the 215-residue chain is MADS-box transcription factor 4 (215 aa).

The region spanning 1 to 61 (MGRGKIEIKR…GKLSDYCTPK (61 aa)) is the MADS-box domain. The region spanning 89–175 (HKSLSAEIDR…AFRVHQQEVE (87 aa)) is the K-box domain.

May interact with the K-box of MADS16. As to expression, highly expressed in lodicules, at intermediate levels in stamens, and weakly in carpels. Expressed in pollen.

The protein localises to the nucleus. Functionally, probable transcription factor involved in the development of floral organs. B-class protein required for normal development of lodicules and stamens (whorls 2 and 3). May function as a heterodimer with MADS16. The polypeptide is MADS-box transcription factor 4 (MADS4) (Oryza sativa subsp. japonica (Rice)).